The primary structure comprises 49 residues: Large ribosomal subunit protein bL33A (49 aa).

This sequence belongs to the bacterial ribosomal protein bL33 family.

The polypeptide is Large ribosomal subunit protein bL33A (Staphylococcus saprophyticus subsp. saprophyticus (strain ATCC 15305 / DSM 20229 / NCIMB 8711 / NCTC 7292 / S-41)).